Consider the following 318-residue polypeptide: uncharacterized protein (318 aa).

Basic and acidic residues predominate over residues 1 to 22 (MKASQERSEARRTAHSVKEKKY). Disordered regions lie at residues 1–29 (MKAS…ASPR) and 293–318 (DDGD…DDDE).

This is an uncharacterized protein from Ictalurid herpesvirus 1 (strain Auburn) (IcHV-1).